Here is a 278-residue protein sequence, read N- to C-terminus: uncharacterized protein (278 aa).

Over 1–34 (MAKTIKVIRKKDPKKKNLSDPLAKQKLVWKIGHV) the chain is Cytoplasmic. Residues 35 to 55 (LTLVFGLLFSITYFYHVLIFF) traverse the membrane as a helical segment. Residues 56-129 (KYRSWKWLFL…DLLSSENFHT (74 aa)) lie on the Extracellular side of the membrane. The chain crosses the membrane as a helical span at residues 130–150 (LLIACLWFFGGGKSFYKILPY). Residues 151–180 (MILSYLHLTKMNYELNANKEEKIPLTPKDR) lie on the Cytoplasmic side of the membrane. A helical membrane pass occupies residues 181–201 (KMLHLLAYSELLVILALTLDT). Residues 202-205 (ILFK) are Extracellular-facing. The helical transmembrane segment at 206 to 222 (TGTSGFMLVIYVGIYWL) threads the bilayer. The Cytoplasmic portion of the chain corresponds to 223 to 278 (RLNFSPYAQVAVLELLVKFEKYVPKKYRDKWQVIKNFIYMKMKEHEKRTEEVARYA).

Its subcellular location is the cell membrane. This is an uncharacterized protein from Saccharomyces cerevisiae (strain ATCC 204508 / S288c) (Baker's yeast).